Here is a 142-residue protein sequence, read N- to C-terminus: 3-hydroxyacyl-[acyl-carrier-protein] dehydratase FabZ (142 aa).

H47 is a catalytic residue.

It belongs to the thioester dehydratase family. FabZ subfamily.

It localises to the cytoplasm. The enzyme catalyses a (3R)-hydroxyacyl-[ACP] = a (2E)-enoyl-[ACP] + H2O. In terms of biological role, involved in unsaturated fatty acids biosynthesis. Catalyzes the dehydration of short chain beta-hydroxyacyl-ACPs and long chain saturated and unsaturated beta-hydroxyacyl-ACPs. In Thermoanaerobacter sp. (strain X514), this protein is 3-hydroxyacyl-[acyl-carrier-protein] dehydratase FabZ.